The sequence spans 305 residues: UDP-3-O-acyl-N-acetylglucosamine deacetylase (305 aa).

3 residues coordinate Zn(2+): His-78, His-237, and Asp-241. The active-site Proton donor is the His-264.

It belongs to the LpxC family. It depends on Zn(2+) as a cofactor.

It carries out the reaction a UDP-3-O-[(3R)-3-hydroxyacyl]-N-acetyl-alpha-D-glucosamine + H2O = a UDP-3-O-[(3R)-3-hydroxyacyl]-alpha-D-glucosamine + acetate. It functions in the pathway glycolipid biosynthesis; lipid IV(A) biosynthesis; lipid IV(A) from (3R)-3-hydroxytetradecanoyl-[acyl-carrier-protein] and UDP-N-acetyl-alpha-D-glucosamine: step 2/6. Catalyzes the hydrolysis of UDP-3-O-myristoyl-N-acetylglucosamine to form UDP-3-O-myristoylglucosamine and acetate, the committed step in lipid A biosynthesis. This is UDP-3-O-acyl-N-acetylglucosamine deacetylase from Burkholderia ambifaria (strain MC40-6).